A 139-amino-acid chain; its full sequence is D-ribose pyranase (139 aa).

The active-site Proton donor is His-20. Substrate contacts are provided by residues Asp-28, His-106, and 128 to 130 (FAN).

Belongs to the RbsD / FucU family. RbsD subfamily. Homodecamer.

It is found in the cytoplasm. The enzyme catalyses beta-D-ribopyranose = beta-D-ribofuranose. It functions in the pathway carbohydrate metabolism; D-ribose degradation; D-ribose 5-phosphate from beta-D-ribopyranose: step 1/2. Catalyzes the interconversion of beta-pyran and beta-furan forms of D-ribose. This is D-ribose pyranase from Klebsiella pneumoniae (strain 342).